The chain runs to 284 residues: Bifunctional protein FolD (284 aa).

Residues 163–165, serine 188, and isoleucine 229 contribute to the NADP(+) site; that span reads GRS.

It belongs to the tetrahydrofolate dehydrogenase/cyclohydrolase family. As to quaternary structure, homodimer.

The catalysed reaction is (6R)-5,10-methylene-5,6,7,8-tetrahydrofolate + NADP(+) = (6R)-5,10-methenyltetrahydrofolate + NADPH. The enzyme catalyses (6R)-5,10-methenyltetrahydrofolate + H2O = (6R)-10-formyltetrahydrofolate + H(+). It functions in the pathway one-carbon metabolism; tetrahydrofolate interconversion. In terms of biological role, catalyzes the oxidation of 5,10-methylenetetrahydrofolate to 5,10-methenyltetrahydrofolate and then the hydrolysis of 5,10-methenyltetrahydrofolate to 10-formyltetrahydrofolate. The chain is Bifunctional protein FolD from Campylobacter hominis (strain ATCC BAA-381 / DSM 21671 / CCUG 45161 / LMG 19568 / NCTC 13146 / CH001A).